Reading from the N-terminus, the 147-residue chain is Large ribosomal subunit protein bL9 (147 aa).

The protein belongs to the bacterial ribosomal protein bL9 family.

Functionally, binds to the 23S rRNA. The sequence is that of Large ribosomal subunit protein bL9 from Citrifermentans bemidjiense (strain ATCC BAA-1014 / DSM 16622 / JCM 12645 / Bem) (Geobacter bemidjiensis).